The following is a 459-amino-acid chain: Glutamate--tRNA ligase 2 (459 aa).

Residues P8–N18 carry the 'HIGH' region motif. Positions G249–R253 match the 'KMSKS' region motif. Residue K252 participates in ATP binding.

Belongs to the class-I aminoacyl-tRNA synthetase family. Glutamate--tRNA ligase type 1 subfamily. As to quaternary structure, monomer.

Its subcellular location is the cytoplasm. The catalysed reaction is tRNA(Glu) + L-glutamate + ATP = L-glutamyl-tRNA(Glu) + AMP + diphosphate. In terms of biological role, catalyzes the attachment of glutamate to tRNA(Glu) in a two-step reaction: glutamate is first activated by ATP to form Glu-AMP and then transferred to the acceptor end of tRNA(Glu). The protein is Glutamate--tRNA ligase 2 of Bartonella henselae (strain ATCC 49882 / DSM 28221 / CCUG 30454 / Houston 1) (Rochalimaea henselae).